A 379-amino-acid chain; its full sequence is Queuine tRNA-ribosyltransferase (379 aa).

The active-site Proton acceptor is the D94. Substrate is bound by residues 94–98 (DSGGF), D148, Q191, and G218. Residues 249–255 (GVGSPDS) are RNA binding. D268 functions as the Nucleophile in the catalytic mechanism. Positions 273-277 (TRIAR) are RNA binding; important for wobble base 34 recognition. Zn(2+)-binding residues include C306, C308, C311, and H337.

The protein belongs to the queuine tRNA-ribosyltransferase family. In terms of assembly, homodimer. Within each dimer, one monomer is responsible for RNA recognition and catalysis, while the other monomer binds to the replacement base PreQ1. The cofactor is Zn(2+).

It catalyses the reaction 7-aminomethyl-7-carbaguanine + guanosine(34) in tRNA = 7-aminomethyl-7-carbaguanosine(34) in tRNA + guanine. It functions in the pathway tRNA modification; tRNA-queuosine biosynthesis. Functionally, catalyzes the base-exchange of a guanine (G) residue with the queuine precursor 7-aminomethyl-7-deazaguanine (PreQ1) at position 34 (anticodon wobble position) in tRNAs with GU(N) anticodons (tRNA-Asp, -Asn, -His and -Tyr). Catalysis occurs through a double-displacement mechanism. The nucleophile active site attacks the C1' of nucleotide 34 to detach the guanine base from the RNA, forming a covalent enzyme-RNA intermediate. The proton acceptor active site deprotonates the incoming PreQ1, allowing a nucleophilic attack on the C1' of the ribose to form the product. After dissociation, two additional enzymatic reactions on the tRNA convert PreQ1 to queuine (Q), resulting in the hypermodified nucleoside queuosine (7-(((4,5-cis-dihydroxy-2-cyclopenten-1-yl)amino)methyl)-7-deazaguanosine). The protein is Queuine tRNA-ribosyltransferase of Listeria monocytogenes serotype 4a (strain HCC23).